A 446-amino-acid chain; its full sequence is Tubulin beta-2 chain (446 aa).

GTP-binding residues include Gln-11, Glu-69, Ser-138, Gly-142, Thr-143, Gly-144, Asn-204, and Asn-226. A Mg(2+)-binding site is contributed by Glu-69.

Belongs to the tubulin family. In terms of assembly, dimer of alpha and beta chains. A typical microtubule is a hollow water-filled tube with an outer diameter of 25 nm and an inner diameter of 15 nM. Alpha-beta heterodimers associate head-to-tail to form protofilaments running lengthwise along the microtubule wall with the beta-tubulin subunit facing the microtubule plus end conferring a structural polarity. Microtubules usually have 13 protofilaments but different protofilament numbers can be found in some organisms and specialized cells. Mg(2+) is required as a cofactor.

It is found in the cytoplasm. The protein localises to the cytoskeleton. Its function is as follows. Tubulin is the major constituent of microtubules, a cylinder consisting of laterally associated linear protofilaments composed of alpha- and beta-tubulin heterodimers. Microtubules grow by the addition of GTP-tubulin dimers to the microtubule end, where a stabilizing cap forms. Below the cap, tubulin dimers are in GDP-bound state, owing to GTPase activity of alpha-tubulin. This chain is Tubulin beta-2 chain (tub2), found in Hypocrea rufa (Trichoderma viride).